The following is a 72-amino-acid chain: DNA gyrase inhibitor YacG (72 aa).

The Zn(2+) site is built by Cys14, Cys17, Cys33, and Cys37.

This sequence belongs to the DNA gyrase inhibitor YacG family. Interacts with GyrB. The cofactor is Zn(2+).

In terms of biological role, inhibits all the catalytic activities of DNA gyrase by preventing its interaction with DNA. Acts by binding directly to the C-terminal domain of GyrB, which probably disrupts DNA binding by the gyrase. The protein is DNA gyrase inhibitor YacG of Mannheimia succiniciproducens (strain KCTC 0769BP / MBEL55E).